Here is a 412-residue protein sequence, read N- to C-terminus: Arginine biosynthesis bifunctional protein ArgJ (412 aa).

Positions 162, 188, 199, 285, 407, and 412 each coordinate substrate. Catalysis depends on Thr-199, which acts as the Nucleophile.

It belongs to the ArgJ family. In terms of assembly, heterotetramer of two alpha and two beta chains.

Its subcellular location is the cytoplasm. The catalysed reaction is N(2)-acetyl-L-ornithine + L-glutamate = N-acetyl-L-glutamate + L-ornithine. It catalyses the reaction L-glutamate + acetyl-CoA = N-acetyl-L-glutamate + CoA + H(+). The protein operates within amino-acid biosynthesis; L-arginine biosynthesis; L-ornithine and N-acetyl-L-glutamate from L-glutamate and N(2)-acetyl-L-ornithine (cyclic): step 1/1. It functions in the pathway amino-acid biosynthesis; L-arginine biosynthesis; N(2)-acetyl-L-ornithine from L-glutamate: step 1/4. Catalyzes two activities which are involved in the cyclic version of arginine biosynthesis: the synthesis of N-acetylglutamate from glutamate and acetyl-CoA as the acetyl donor, and of ornithine by transacetylation between N(2)-acetylornithine and glutamate. This Staphylococcus saprophyticus subsp. saprophyticus (strain ATCC 15305 / DSM 20229 / NCIMB 8711 / NCTC 7292 / S-41) protein is Arginine biosynthesis bifunctional protein ArgJ.